The chain runs to 498 residues: Angiopoietin-1 (498 aa).

Positions 1 to 15 (MTVFLSFAFLAAILT) are cleaved as a signal peptide. Positions 81–119 (QKLQHLEHVMENYTQWLQKLENYIVENMKSEMAQIQQNA) form a coiled coil. Asn-92, Asn-122, Asn-154, Asn-243, and Asn-295 each carry an N-linked (GlcNAc...) asparagine glycan. Residues 153–261 (LNQTSRLEIQ…LELMDTVHNL (109 aa)) are a coiled coil. The Fibrinogen C-terminal domain maps to 277 to 497 (REEEKPFRDC…STTMMIRPLD (221 aa)). 2 disulfides stabilise this stretch: Cys-286/Cys-315 and Cys-439/Cys-452.

Homooligomer. Interacts with TEK/TIE2. Interacts with SVEP1/polydom. Interacts with THBD; this interaction significantly inhibits the generation of activated PC and TAFIa/CPB2 by the thrombin/thrombomodulin complex. Glycosylated.

It localises to the secreted. Functionally, binds and activates TEK/TIE2 receptor by inducing its dimerization and tyrosine phosphorylation. Plays an important role in the regulation of angiogenesis, endothelial cell survival, proliferation, migration, adhesion and cell spreading, reorganization of the actin cytoskeleton, but also maintenance of vascular quiescence. Required for normal angiogenesis and heart development during embryogenesis. After birth, activates or inhibits angiogenesis, depending on the context. Inhibits angiogenesis and promotes vascular stability in quiescent vessels, where endothelial cells have tight contacts. In quiescent vessels, ANGPT1 oligomers recruit TEK to cell-cell contacts, forming complexes with TEK molecules from adjoining cells, and this leads to preferential activation of phosphatidylinositol 3-kinase and the AKT1 signaling cascades. In migrating endothelial cells that lack cell-cell adhesions, ANGT1 recruits TEK to contacts with the extracellular matrix, leading to the formation of focal adhesion complexes, activation of PTK2/FAK and of the downstream kinases MAPK1/ERK2 and MAPK3/ERK1, and ultimately to the stimulation of sprouting angiogenesis. Mediates blood vessel maturation/stability. Implicated in endothelial developmental processes later and distinct from that of VEGF. Appears to play a crucial role in mediating reciprocal interactions between the endothelium and surrounding matrix and mesenchyme. This Homo sapiens (Human) protein is Angiopoietin-1 (ANGPT1).